We begin with the raw amino-acid sequence, 200 residues long: GTP cyclohydrolase-2 (200 aa).

Residue 49–53 (RIHSE) coordinates GTP. Zn(2+) is bound by residues cysteine 54, cysteine 65, and cysteine 67. Residues glutamine 70, 92–94 (EGR), and threonine 114 each bind GTP. Aspartate 126 acts as the Proton acceptor in catalysis. Catalysis depends on arginine 128, which acts as the Nucleophile. GTP is bound by residues threonine 149 and lysine 154.

It belongs to the GTP cyclohydrolase II family. The cofactor is Zn(2+).

It catalyses the reaction GTP + 4 H2O = 2,5-diamino-6-hydroxy-4-(5-phosphoribosylamino)-pyrimidine + formate + 2 phosphate + 3 H(+). Its pathway is cofactor biosynthesis; riboflavin biosynthesis; 5-amino-6-(D-ribitylamino)uracil from GTP: step 1/4. In terms of biological role, catalyzes the conversion of GTP to 2,5-diamino-6-ribosylamino-4(3H)-pyrimidinone 5'-phosphate (DARP), formate and pyrophosphate. The protein is GTP cyclohydrolase-2 of Saccharophagus degradans (strain 2-40 / ATCC 43961 / DSM 17024).